Here is a 195-residue protein sequence, read N- to C-terminus: uncharacterized protein (195 aa).

The disordered stretch occupies residues 86–158; it reads LPSEGGWTSG…PAPVSGEPPE (73 aa).

This is an uncharacterized protein from Homo sapiens (Human).